The following is a 442-amino-acid chain: Meiotically up-regulated gene 191 protein (442 aa).

Residue threonine 361 is modified to Phosphothreonine. The segment covering 416 to 429 (RNNPSSGESTTLPQ) has biased composition (polar residues). Residues 416 to 442 (RNNPSSGESTTLPQPSHGKKDKDCVIS) form a disordered region. The segment covering 433 to 442 (GKKDKDCVIS) has biased composition (basic and acidic residues).

Its subcellular location is the cytoplasm. It is found in the nucleus. Its function is as follows. Has a role in meiosis. In Schizosaccharomyces pombe (strain 972 / ATCC 24843) (Fission yeast), this protein is Meiotically up-regulated gene 191 protein (mug191).